We begin with the raw amino-acid sequence, 328 residues long: Malate dehydrogenase 1 (328 aa).

12–18 (GAAGQIG) is a binding site for NAD(+). R95 and R101 together coordinate substrate. Residues N108, Q115, and 132 to 134 (VGN) each bind NAD(+). Substrate is bound by residues N134 and R165. H190 (proton acceptor) is an active-site residue.

This sequence belongs to the LDH/MDH superfamily. MDH type 2 family.

The enzyme catalyses (S)-malate + NAD(+) = oxaloacetate + NADH + H(+). In terms of biological role, catalyzes the reversible oxidation of malate to oxaloacetate. This is Malate dehydrogenase 1 from Albidiferax ferrireducens (strain ATCC BAA-621 / DSM 15236 / T118) (Rhodoferax ferrireducens).